We begin with the raw amino-acid sequence, 505 residues long: Aspartyl/glutamyl-tRNA(Asn/Gln) amidotransferase subunit B (505 aa).

The protein belongs to the GatB/GatE family. GatB subfamily. As to quaternary structure, heterotrimer of A, B and C subunits.

It carries out the reaction L-glutamyl-tRNA(Gln) + L-glutamine + ATP + H2O = L-glutaminyl-tRNA(Gln) + L-glutamate + ADP + phosphate + H(+). The catalysed reaction is L-aspartyl-tRNA(Asn) + L-glutamine + ATP + H2O = L-asparaginyl-tRNA(Asn) + L-glutamate + ADP + phosphate + 2 H(+). Its function is as follows. Allows the formation of correctly charged Asn-tRNA(Asn) or Gln-tRNA(Gln) through the transamidation of misacylated Asp-tRNA(Asn) or Glu-tRNA(Gln) in organisms which lack either or both of asparaginyl-tRNA or glutaminyl-tRNA synthetases. The reaction takes place in the presence of glutamine and ATP through an activated phospho-Asp-tRNA(Asn) or phospho-Glu-tRNA(Gln). This is Aspartyl/glutamyl-tRNA(Asn/Gln) amidotransferase subunit B from Haloarcula marismortui (strain ATCC 43049 / DSM 3752 / JCM 8966 / VKM B-1809) (Halobacterium marismortui).